The chain runs to 159 residues: NADH-quinone oxidoreductase subunit I (159 aa).

2 consecutive 4Fe-4S ferredoxin-type domains span residues 51–80 (RRYE…IEAD) and 90–119 (TRYD…EGPN). Residues Cys60, Cys63, Cys66, Cys70, Cys99, Cys102, Cys105, and Cys109 each contribute to the [4Fe-4S] cluster site.

Belongs to the complex I 23 kDa subunit family. In terms of assembly, NDH-1 is composed of 14 different subunits. Subunits NuoA, H, J, K, L, M, N constitute the membrane sector of the complex. [4Fe-4S] cluster is required as a cofactor.

It is found in the cell membrane. The catalysed reaction is a quinone + NADH + 5 H(+)(in) = a quinol + NAD(+) + 4 H(+)(out). Functionally, NDH-1 shuttles electrons from NADH, via FMN and iron-sulfur (Fe-S) centers, to quinones in the respiratory chain. The immediate electron acceptor for the enzyme in this species is believed to be ubiquinone. Couples the redox reaction to proton translocation (for every two electrons transferred, four hydrogen ions are translocated across the cytoplasmic membrane), and thus conserves the redox energy in a proton gradient. This Rickettsia africae (strain ESF-5) protein is NADH-quinone oxidoreductase subunit I.